The primary structure comprises 203 residues: Tic20 family protein Ycf60 (203 aa).

5 consecutive transmembrane segments (helical) span residues 2–22 (IRLF…RLAL), 51–71 (TVPY…YVLP), 84–104 (IILP…VTFF), 131–151 (ILLF…PIEF), and 153–173 (ISFL…STIT).

Belongs to the Tic20 family.

Its subcellular location is the plastid. It localises to the chloroplast membrane. This Pyropia yezoensis (Susabi-nori) protein is Tic20 family protein Ycf60 (ycf60).